The following is a 203-amino-acid chain: Large ribosomal subunit protein eL15 (203 aa).

Positions A166–R203 are disordered. Residues K169–K192 show a composition bias toward basic residues. The segment covering R193–R203 has biased composition (polar residues).

The protein belongs to the eukaryotic ribosomal protein eL15 family.

The protein is Large ribosomal subunit protein eL15 (rpl15) of Aspergillus niger.